Consider the following 405-residue polypeptide: Zinc finger protein ubi-d4 (405 aa).

4 disordered regions span residues 80-147 (RKKR…GEFP), 165-194 (DDLD…GGAR), 210-230 (ACDN…VCGK), and 248-280 (AEEE…PDGL). Basic and acidic residues-rich tracts occupy residues 100 to 110 (PDTDQTLKKEG) and 126 to 140 (DPLE…RMDD). Positions 165–174 (DDLDDEDYEE) are enriched in acidic residues. The segment at 209-246 (YACDNSYKQKHSLKPPDRVCGKRYKNRPGLSYHYAHSH) adopts a C2H2-type; atypical zinc-finger fold. Positions 267 to 277 (RSEEQKSKKGP) are enriched in basic and acidic residues. PHD-type zinc fingers lie at residues 284 to 344 (NNYC…CKCC) and 341 to 391 (CKCC…CLDL).

It belongs to the requiem/DPF family.

It localises to the cytoplasm. The protein localises to the nucleus. May be a transcription factor required for the apoptosis response following survival factor withdrawal from myeloid cells. Might also have a role in the development and maturation of lymphoid cells. This Gallus gallus (Chicken) protein is Zinc finger protein ubi-d4 (REQ).